We begin with the raw amino-acid sequence, 276 residues long: Diaminopimelate epimerase (276 aa).

Asn13, Gln46, and Asn66 together coordinate substrate. The active-site Proton donor is the Cys75. Substrate-binding positions include 76-77, Asn159, Asn192, and 210-211; these read GN and ER. The active-site Proton acceptor is Cys219. A substrate-binding site is contributed by 220–221; that stretch reads GS.

Belongs to the diaminopimelate epimerase family. Homodimer.

The protein resides in the cytoplasm. The catalysed reaction is (2S,6S)-2,6-diaminopimelate = meso-2,6-diaminopimelate. The protein operates within amino-acid biosynthesis; L-lysine biosynthesis via DAP pathway; DL-2,6-diaminopimelate from LL-2,6-diaminopimelate: step 1/1. In terms of biological role, catalyzes the stereoinversion of LL-2,6-diaminopimelate (L,L-DAP) to meso-diaminopimelate (meso-DAP), a precursor of L-lysine and an essential component of the bacterial peptidoglycan. In Vibrio campbellii (strain ATCC BAA-1116), this protein is Diaminopimelate epimerase.